Here is a 506-residue protein sequence, read N- to C-terminus: ATP synthase subunit alpha, mitochondrial (506 aa).

Residue 171 to 178 (GDRQTGKT) participates in ATP binding.

Belongs to the ATPase alpha/beta chains family. In terms of assembly, F-type ATPases have 2 components, CF(1) - the catalytic core - and CF(0) - the membrane proton channel. CF(1) has five subunits: alpha(3), beta(3), gamma(1), delta(1), epsilon(1). CF(0) has three main subunits: a, b and c.

The protein localises to the mitochondrion. Its subcellular location is the mitochondrion inner membrane. Functionally, mitochondrial membrane ATP synthase (F(1)F(0) ATP synthase or Complex V) produces ATP from ADP in the presence of a proton gradient across the membrane which is generated by electron transport complexes of the respiratory chain. F-type ATPases consist of two structural domains, F(1) - containing the extramembraneous catalytic core, and F(0) - containing the membrane proton channel, linked together by a central stalk and a peripheral stalk. During catalysis, ATP synthesis in the catalytic domain of F(1) is coupled via a rotary mechanism of the central stalk subunits to proton translocation. Subunits alpha and beta form the catalytic core in F(1). Rotation of the central stalk against the surrounding alpha(3)beta(3) subunits leads to hydrolysis of ATP in three separate catalytic sites on the beta subunits. Subunit alpha does not bear the catalytic high-affinity ATP-binding sites. In Beta vulgaris (Sugar beet), this protein is ATP synthase subunit alpha, mitochondrial (ATPA).